Consider the following 159-residue polypeptide: Ubiquitin-like protein ATG12 (159 aa).

Positions 1–40 are disordered; the sequence is MASPQPPFGGGSNSNSNTASPSNNLSPTASPLLEGRDSPN. Positions 13–27 are enriched in low complexity; that stretch reads NSNSNTASPSNNLSP. Residue Gly-159 forms a Glycyl lysine isopeptide (Gly-Lys) (interchain with K-218 in ATG5) linkage.

Belongs to the ATG12 family. In terms of assembly, forms a conjugate with ATG5. Forms a thioester bond with the 'Cys-116' of ATG10. Interacts with the ATG7 C-terminal 40 amino acids domain. The ATG12-ATG5 conjugate forms a complex with several units of ATG16. The ATG12-ATG5 conjugate also associates with ATG3.

Its subcellular location is the preautophagosomal structure membrane. The protein localises to the cytoplasm. Functionally, ubiquitin-like protein involved in cytoplasm to vacuole transport (Cvt), autophagy vesicles formation, mitophagy, and nucleophagy. Conjugation with ATG5 through a ubiquitin-like conjugating system involving also ATG7 as an E1-like activating enzyme and ATG10 as an E2-like conjugating enzyme, is essential for its function. The ATG12-ATG5 conjugate acts as an E3-like enzyme which is required for lipidation of ATG8 and ATG8 association to the vesicle membranes. ATG12-ATG5 rearranges the ATG3 catalytic center and enhances its E2 activity. Plays a role in sexual development and perithecia formation. The chain is Ubiquitin-like protein ATG12 from Sordaria macrospora (strain ATCC MYA-333 / DSM 997 / K(L3346) / K-hell).